Consider the following 77-residue polypeptide: UPF0291 protein EAT1b_0405 (77 aa).

Residues 53–77 are disordered; that stretch reads KVVDPDGNDVTPEKLKEDQKRYRGE. Residues 63–77 show a composition bias toward basic and acidic residues; the sequence is TPEKLKEDQKRYRGE.

Belongs to the UPF0291 family.

The protein resides in the cytoplasm. This chain is UPF0291 protein EAT1b_0405, found in Exiguobacterium sp. (strain ATCC BAA-1283 / AT1b).